Reading from the N-terminus, the 317-residue chain is Olfactory receptor 1B1 (317 aa).

At 1–29 the chain is on the extracellular side; sequence MSFAPNASHSPVFLLLGFSRANISYTLLF. N6 and N22 each carry an N-linked (GlcNAc...) asparagine glycan. Residues 30–50 traverse the membrane as a helical segment; it reads FLFLAIYLTTILGNVTLVLLI. At 51-66 the chain is on the cytoplasmic side; sequence SWDSRLHSPMYYLLRG. A helical transmembrane segment spans residues 67–87; that stretch reads LSVIDMGLSTVTLPQLLAHLV. At 88-98 the chain is on the extracellular side; the sequence is SHYPTIPAARC. C98 and C184 are oxidised to a cystine. A helical transmembrane segment spans residues 99 to 119; sequence LAQFFFFYAFGVTDTLVIAVM. The Cytoplasmic segment spans residues 120–144; that stretch reads ALDRYVAICDPLHYALVMNHQRCAC. A helical transmembrane segment spans residues 145–165; it reads LLALSWVVSILHTMLRVGLVL. The Extracellular segment spans residues 166-201; that stretch reads PLCWTGDAGGNVNLPHFFCDHRPLLRASCSDIHSNE. Residues 202–222 traverse the membrane as a helical segment; it reads LAIFFEGGFLMLGPCALIVLS. The Cytoplasmic segment spans residues 223–248; the sequence is YVRIGAAILRLPSAAGRRRAVSTCGS. Residues 249–269 form a helical membrane-spanning segment; it reads HLTMVGFLYGTIICVYFQPPF. The Extracellular segment spans residues 270-276; the sequence is QNSQYQD. Residues 277-297 form a helical membrane-spanning segment; it reads MVASVMYTAITPLANPFVYSL. Topologically, residues 298-317 are cytoplasmic; the sequence is HNKDVKGALCRLLEWVKVDP.

This sequence belongs to the G-protein coupled receptor 1 family.

The protein localises to the cell membrane. Its function is as follows. Odorant receptor. The chain is Olfactory receptor 1B1 (OR1B1) from Homo sapiens (Human).